Here is a 355-residue protein sequence, read N- to C-terminus: Protein pelota homolog (355 aa).

This sequence belongs to the eukaryotic release factor 1 family. Pelota subfamily. In terms of assembly, monomer. A divalent metal cation serves as cofactor.

It localises to the cytoplasm. In terms of biological role, may function in recognizing stalled ribosomes, interact with stem-loop structures in stalled mRNA molecules, and effect endonucleolytic cleavage of the mRNA. May play a role in the release non-functional ribosomes and degradation of damaged mRNAs. Has endoribonuclease activity. The sequence is that of Protein pelota homolog from Natronomonas pharaonis (strain ATCC 35678 / DSM 2160 / CIP 103997 / JCM 8858 / NBRC 14720 / NCIMB 2260 / Gabara) (Halobacterium pharaonis).